The primary structure comprises 834 residues: Leucine--tRNA ligase (834 aa).

A 'HIGH' region motif is present at residues 40–50; that stretch reads PYPSGNIHMGH. The short motif at 586-590 is the 'KMSKS' region element; sequence KMSKS. Lysine 589 contributes to the ATP binding site.

Belongs to the class-I aminoacyl-tRNA synthetase family.

It localises to the cytoplasm. It carries out the reaction tRNA(Leu) + L-leucine + ATP = L-leucyl-tRNA(Leu) + AMP + diphosphate. This Nitratidesulfovibrio vulgaris (strain DSM 19637 / Miyazaki F) (Desulfovibrio vulgaris) protein is Leucine--tRNA ligase.